Reading from the N-terminus, the 143-residue chain is Large ribosomal subunit protein uL15 (143 aa).

2 stretches are compositionally biased toward basic residues: residues 1–13 and 23–38; these read MIRK…KMRG and KKHR…GNAG. A disordered region spans residues 1–38; sequence MIRKSKKITKMRGSRTCGYGEAKKHRGAGHRGGRGNAG.

This sequence belongs to the universal ribosomal protein uL15 family. As to quaternary structure, part of the 50S ribosomal subunit.

Its function is as follows. Binds to the 23S rRNA. In Methanococcus maripaludis (strain C7 / ATCC BAA-1331), this protein is Large ribosomal subunit protein uL15.